We begin with the raw amino-acid sequence, 1244 residues long: ATP-dependent helicase/nuclease subunit A (1244 aa).

The region spanning 4–475 (KKWTAEQLAA…IGLSKNFRSR (472 aa)) is the UvrD-like helicase ATP-binding domain. 25–32 (AAAGAGKT) contacts ATP. Residues 515 to 816 (EDVKTATGPV…RIMSIHKSKG (302 aa)) form the UvrD-like helicase C-terminal domain. Residues 538–559 (EQNTDSAEEKLTDGEEQEDLDS) form a disordered region.

This sequence belongs to the helicase family. AddA subfamily. In terms of assembly, heterodimer of AddA and AddB/RexB. Requires Mg(2+) as cofactor.

It catalyses the reaction Couples ATP hydrolysis with the unwinding of duplex DNA by translocating in the 3'-5' direction.. It carries out the reaction ATP + H2O = ADP + phosphate + H(+). In terms of biological role, the heterodimer acts as both an ATP-dependent DNA helicase and an ATP-dependent, dual-direction single-stranded exonuclease. Recognizes the chi site generating a DNA molecule suitable for the initiation of homologous recombination. The AddA nuclease domain is required for chi fragment generation; this subunit has the helicase and 3' -&gt; 5' nuclease activities. The chain is ATP-dependent helicase/nuclease subunit A from Desulforamulus reducens (strain ATCC BAA-1160 / DSM 100696 / MI-1) (Desulfotomaculum reducens).